The primary structure comprises 268 residues: MRLPVNRSLFIPFIVAGDPSADLTVDLALALQDAGADVLELGVPYSDPLADGPTIQRAAARALAGQMTLPKAIQLVADMRKKGVKIPIIIFTYYNPVLQLGEESFFALAQENGADGVLIPDLPFEESGPLLELSERFGLPLISLVAPTSKQRIEQIASAAQGFLYCVSSLGVTGVRETLPESLGHFLGEVKRHSRVPVVVGFGISTPEQVAMLKDACDGVVVGSALVQKIEQLLERLQTLEEKNAAIAEFASYARSLAAPLREPCSSR.

Active-site proton acceptor residues include glutamate 40 and aspartate 51.

The protein belongs to the TrpA family. In terms of assembly, tetramer of two alpha and two beta chains.

The catalysed reaction is (1S,2R)-1-C-(indol-3-yl)glycerol 3-phosphate + L-serine = D-glyceraldehyde 3-phosphate + L-tryptophan + H2O. It functions in the pathway amino-acid biosynthesis; L-tryptophan biosynthesis; L-tryptophan from chorismate: step 5/5. Its function is as follows. The alpha subunit is responsible for the aldol cleavage of indoleglycerol phosphate to indole and glyceraldehyde 3-phosphate. This chain is Tryptophan synthase alpha chain, found in Geobacillus thermodenitrificans (strain NG80-2).